Consider the following 501-residue polypeptide: Cystine/glutamate transporter (501 aa).

The Cytoplasmic portion of the chain corresponds to 1–43; it reads MVRKPVVSTISKGGYLQGNVNGRLPSLGNKEPPGQEKVQLKRK. Ser-26 is modified (phosphoserine). Residues 44–64 form a helical membrane-spanning segment; that stretch reads VTLLRGVSIIIGTIIGAGIFI. At 65 to 74 the chain is on the extracellular side; sequence SPKGVLQNTG. The helical transmembrane segment at 75–95 threads the bilayer; sequence SVGMSLTIWTVCGVLSLFGAL. Residues 96 to 101 are Cytoplasmic-facing; sequence SYAELG. The stretch at 102–116 is an intramembrane region; that stretch reads TTIKKSGGHYTYILE. At 117-130 the chain is on the cytoplasmic side; the sequence is VFGPLPAFVRVWVE. A helical membrane pass occupies residues 131 to 150; that stretch reads LLIIRPAATAVISLAFGRYI. Arg-135 serves as a coordination point for L-glutamate. Residues 151-163 lie on the Extracellular side of the membrane; sequence LEPFFIQCEIPEL. The chain crosses the membrane as a helical span at residues 164-179; the sequence is AIKLITAVGITVVMVL. Residues 180–193 are Cytoplasmic-facing; it reads NSMSVSWSARIQIF. Residues 194 to 210 traverse the membrane as a helical segment; the sequence is LTFCKLTAILIIIVPGV. Over 211 to 234 the chain is Extracellular; sequence MQLIKGQTQNFKDAFSGRDSSITR. The helical transmembrane segment at 235–255 threads the bilayer; it reads LPLAFYYGMYAYAGWFYLNFV. Tyr-244 is an L-glutamate binding site. The Cytoplasmic segment spans residues 256–265; sequence TEEVENPEKT. The chain crosses the membrane as a helical span at residues 266 to 286; that stretch reads IPLAICISMAIVTIGYVLTNV. Over 287–317 the chain is Extracellular; that stretch reads AYFTTINAEELLLSNAVAVTFSERLLGNFSL. An N-linked (GlcNAc...) asparagine glycan is attached at Asn-314. The chain crosses the membrane as a helical span at residues 318 to 338; sequence AVPIFVALSCFGSMNGGVFAV. Topologically, residues 339–364 are cytoplasmic; sequence SRLFYVASREGHLPEILSMIHVRKHT. A helical transmembrane segment spans residues 365-385; sequence PLPAVIVLHPLTMIMLFSGDL. Topologically, residues 386 to 387 are extracellular; that stretch reads DS. A helical membrane pass occupies residues 388–408; the sequence is LLNFLSFARWLFIGLAVAGLI. Topologically, residues 409–422 are cytoplasmic; it reads YLRYKCPDMHRPFK. The helical transmembrane segment at 423–443 threads the bilayer; the sequence is VPLFIPALFSFTCLFMVALSL. Residues 444-449 are Extracellular-facing; that stretch reads YSDPFS. A helical membrane pass occupies residues 450–470; that stretch reads TGIGFVITLTGVPAYYLFIIW. The Cytoplasmic segment spans residues 471–501; the sequence is DKKPRWFRIMSEKITRTLQIILEVVPEEDKL.

It belongs to the amino acid-polyamine-organocation (APC) superfamily. L-type amino acid transporter (LAT) (TC 2.A.3.8) family. Disulfide-linked heterodimer with the amino acid transport protein SLC3A2/4F2hc; this interaction mediates cell membrane localization. Post-translationally, ubiquitinated by TRIM26; leading to proteasomal degradation. As to expression, expressed in term placenta and primary term cytotrophoblast. Expressed mainly in the brain, but also in pancreas.

The protein resides in the cell membrane. It is found in the cell projection. The protein localises to the microvillus membrane. The enzyme catalyses L-cystine(out) + L-glutamate(in) = L-cystine(in) + L-glutamate(out). It catalyses the reaction an L-alpha-amino acid(in) + L-kynurenine(out) = an L-alpha-amino acid(out) + L-kynurenine(in). It carries out the reaction N-acetyl-L-cysteine(out) + L-glutamate(in) = N-acetyl-L-cysteine(in) + L-glutamate(out). With respect to regulation, inhibited by erastin and sulfasalazine. Inhibited by (S)-lactate. Inactivated by p-chloromercuribenzoic acid and p-chloromercuribenzenesulfonic acid. Functionally, heterodimer with SLC3A2, that functions as an antiporter by mediating the exchange of extracellular anionic L-cystine and intracellular L-glutamate across the cellular plasma membrane. Provides L-cystine for the maintenance of the redox balance between extracellular L-cystine and L-cysteine and for the maintenance of the intracellular levels of glutathione that is essential for cells protection from oxidative stress. The transport is sodium-independent, electroneutral with a stoichiometry of 1:1, and is drove by the high intracellular concentration of L-glutamate and the intracellular reduction of L-cystine. In addition, mediates the import of L-kynurenine leading to anti-ferroptotic signaling propagation required to maintain L-cystine and glutathione homeostasis. Moreover, mediates N-acetyl-L-cysteine uptake into the placenta leading to subsequently down-regulation of pathways associated with oxidative stress, inflammation and apoptosis. In vitro can also transport L-aspartate. May participate in astrocyte and meningeal cell proliferation during development and can provide neuroprotection by promoting glutathione synthesis and delivery from non-neuronal cells such as astrocytes and meningeal cells to immature neurons. Controls the production of pheomelanin pigment directly. The polypeptide is Cystine/glutamate transporter (Homo sapiens (Human)).